The sequence spans 120 residues: Small ribosomal subunit protein uS13 (120 aa).

A disordered region spans residues 97–120 (PVRGQRTKTNARTRKGKKKTVGAK).

Belongs to the universal ribosomal protein uS13 family. As to quaternary structure, part of the 30S ribosomal subunit. Forms a loose heterodimer with protein S19. Forms two bridges to the 50S subunit in the 70S ribosome.

Functionally, located at the top of the head of the 30S subunit, it contacts several helices of the 16S rRNA. In the 70S ribosome it contacts the 23S rRNA (bridge B1a) and protein L5 of the 50S subunit (bridge B1b), connecting the 2 subunits; these bridges are implicated in subunit movement. Contacts the tRNAs in the A and P-sites. The polypeptide is Small ribosomal subunit protein uS13 (Nitratiruptor sp. (strain SB155-2)).